Consider the following 548-residue polypeptide: MKLKKLLLSVLMLLSISGLQAQSLSPSTQIHWDKGTLVIETPERPTDQQHVLGLTAPKMETVRVAFVGLGMRGPWAVWRFCNIPGVEVVALCDYEEDRAEASQKYLRDASLIPADIYSGEKGYETLCQRPDIDLVYIATDWNHHFPVAKYAMKHGKHVAIEVPSAMNLEQCWSLIDLSEQTRLHCFILENCCYDYYEMNALAMAKDGVFGEIIRAEGAYIHELSAFWKSYWQDPNDNDTDNLHWRMKYNMENRGDVYATHGLGPVAQCMDIHRGDRFTTLVAMDTESFVGKQYVENLTGKEPKEFRNGDHTTTLMRTARGKVVEIQHNVMTPQPYNRLFKLTGTKGYATKYPTPEYALSGDVMKDTAPNMDDINAHSFLNDAQKEALEKKYYHPILTKFGEKGRAMGHGGMDYIMDARLVYCLQNGLPLDMDVYDLAEWCCLSELGALSMDNNCAAVTFPDFTRGHWDEMKGYKHAYASAEEEEATEAKAEAYTIAQKEVAAAANLWTLYDNVKNAADEKAQDKALKIYQRAKAKAHQQLAKKLKVKK.

Residues 1–21 form the signal peptide; it reads MKLKKLLLSVLMLLSISGLQA. NAD(+) is bound by residues 71 to 72, D93, 141 to 144, 161 to 162, and N190; these read MR, WNHH, and EV. Residue Y219 participates in substrate binding. 240 to 244 provides a ligand contact to NAD(+); the sequence is DNLHW. Substrate is bound by residues R245, 257–260, and Y335; that span reads YATH. Y257 lines the NAD(+) pocket.

Belongs to the Gfo/Idh/MocA family. Glycosyl hydrolase 109 subfamily. The cofactor is NAD(+).

Its function is as follows. Glycosidase. This Phocaeicola vulgatus (strain ATCC 8482 / DSM 1447 / JCM 5826 / CCUG 4940 / NBRC 14291 / NCTC 11154) (Bacteroides vulgatus) protein is Glycosyl hydrolase family 109 protein 3.